Reading from the N-terminus, the 205-residue chain is ATP phosphoribosyltransferase (205 aa).

This sequence belongs to the ATP phosphoribosyltransferase family. Short subfamily. As to quaternary structure, heteromultimer composed of HisG and HisZ subunits.

The protein localises to the cytoplasm. The enzyme catalyses 1-(5-phospho-beta-D-ribosyl)-ATP + diphosphate = 5-phospho-alpha-D-ribose 1-diphosphate + ATP. Its pathway is amino-acid biosynthesis; L-histidine biosynthesis; L-histidine from 5-phospho-alpha-D-ribose 1-diphosphate: step 1/9. Functionally, catalyzes the condensation of ATP and 5-phosphoribose 1-diphosphate to form N'-(5'-phosphoribosyl)-ATP (PR-ATP). Has a crucial role in the pathway because the rate of histidine biosynthesis seems to be controlled primarily by regulation of HisG enzymatic activity. The polypeptide is ATP phosphoribosyltransferase (Staphylococcus saprophyticus subsp. saprophyticus (strain ATCC 15305 / DSM 20229 / NCIMB 8711 / NCTC 7292 / S-41)).